A 226-amino-acid polypeptide reads, in one-letter code: Peroxiredoxin-like 2C (226 aa).

Residues 1–24 (MAAPVTRQVSGCAGRVPSPAGSVT) are disordered.

Belongs to the peroxiredoxin-like PRXL2 family. PRXL2C subfamily.

Functionally, may positively regulate ERK1/2 signaling and AKT1 activation leading to HIF1A up-regulation with an increased expression of glycolysis genes and enhanced glycolysis. This Mus musculus (Mouse) protein is Peroxiredoxin-like 2C (Prxl2c).